A 333-amino-acid chain; its full sequence is MKTLGEFIVEKQHDFPHATGELTALLSAIKLGAKIIHRDINKAGLVDILGTSGAENVQGEVQMKLDLFANEKLKAALKARGQVAGIASEEEDEIVVFEGVENGKYVVLMDPLDGSSNIDVNVSVGTIFSIYRRITPLGTPVTKEDFLQPGNKQVAAGYVVYGSSTMLVYTTGCGVHAFTYDPSLGVFCLSHESVRFPATGQMYSINEGNYIKFPNGVKKYIKYCQEMDEATHRPYTSRYIGSLVSDFHRNLLKGGIYLYPSTATHPNGKLRLAYECNPIAFLAEQAGGKASDGKNRILDIQPHELHQRSAFFTGTESMVNDVERFIRDYPDNV.

4 residues coordinate Mg(2+): Glu89, Asp110, Leu112, and Asp113. Substrate-binding positions include 113–116 (DGSS), Asn206, Tyr239, 257–259 (YLY), and Lys269. Glu275 is a Mg(2+) binding site.

This sequence belongs to the FBPase class 1 family. As to quaternary structure, homotetramer. The cofactor is Mg(2+).

It localises to the cytoplasm. It catalyses the reaction beta-D-fructose 1,6-bisphosphate + H2O = beta-D-fructose 6-phosphate + phosphate. The protein operates within carbohydrate biosynthesis; gluconeogenesis. The protein is Fructose-1,6-bisphosphatase class 1 of Sodalis glossinidius (strain morsitans).